A 390-amino-acid chain; its full sequence is Transforming protein cbl (390 aa).

Residues 1-52 (ASAGGGCRRGPSFSPGSIPSLAAERAPDPPLAMAGNVKKSSGAGGGGSGGSG) are disordered. Gly residues predominate over residues 42-52 (GAGGGGSGGSG). The tract at residues 77–205 (PPCTVDKKMV…KGIFPSGLFQ (129 aa)) is 4H. In terms of domain architecture, Cbl-PTB spans 77-381 (PPCTVDKKMV…GRNQNPDLTG (305 aa)). An EF-hand-like region spans residues 206–278 (GDTFRITKAD…FEFDIFTRLF (73 aa)). Asp-259, Thr-261, Asn-263, Tyr-265, and Glu-270 together coordinate Ca(2+). An SH2-like region spans residues 279-381 (QPWSSLLRNW…GRNQNPDLTG (103 aa)). Residue Arg-324 coordinates 4-O-phospho-L-tyrosine.

In terms of biological role, induces early B-lineage lymphomas. This is Transforming protein cbl (V-CBL) from Mus musculus (Mouse).